We begin with the raw amino-acid sequence, 227 residues long: UPF0173 metal-dependent hydrolase STK_14180 (227 aa).

The protein belongs to the UPF0173 family.

This is UPF0173 metal-dependent hydrolase STK_14180 from Sulfurisphaera tokodaii (strain DSM 16993 / JCM 10545 / NBRC 100140 / 7) (Sulfolobus tokodaii).